The primary structure comprises 614 residues: MRGVDVIKENLKHLPSRPGVYRMFGEAGEVLYVGKARDLKARVSNYTRMGGHTQRIARMISLTRAMEFVVTETETEALLLEASLVKSLKPRFNVLLRDDKSFPYILIRRNHEAPQIKKYRGSKQDEGDYFGPFANAGAVMRTLDTLQKAFLLRTCEDSVYSARTRPCMLHQIKRCAAPCVGLVSKEDYTALADEAADFLRGKAGELQKRLASEMEAASEAMEFETAARLRDRIRAIAHVRSTQDVNPDGIEEADVFAIAMDGGVSCVQVFFIRAGQNWGASAHFPRHEKDQTAPEILAAFLVQFYDKRPPPKLILVSEPPDQADLIEEALALKAGRRIELRRPERGTKRDLLTQAERNASEALSRKLAESASQERLLTEVQKVFDLAEAPQRIEVYDNSHIQGTNAVGGMIVAGPEGFRKQAYRKFNIKDTEITPGDDYGMMREVMRRRFARAMKEKVAGNVSDWPDLVLIDGGLGQLNATLETLAELGLTPDDVTLVSIAKGVDRNAGREQFFRPGKAPFKLPENAPVLYYLQRLRDEAHRWAIGAHRQKRAAEAARSPLDEIEGIGPTRKKALLHHFGSARGVSRAKVADLMEVDGVNEALAIRIYGHFNSG.

The 79-residue stretch at 16 to 94 (SRPGVYRMFG…VKSLKPRFNV (79 aa)) folds into the GIY-YIG domain. The region spanning 204–239 (GELQKRLASEMEAASEAMEFETAARLRDRIRAIAHV) is the UVR domain.

It belongs to the UvrC family. Interacts with UvrB in an incision complex.

The protein localises to the cytoplasm. The UvrABC repair system catalyzes the recognition and processing of DNA lesions. UvrC both incises the 5' and 3' sides of the lesion. The N-terminal half is responsible for the 3' incision and the C-terminal half is responsible for the 5' incision. The sequence is that of UvrABC system protein C from Hyphomonas neptunium (strain ATCC 15444).